A 422-amino-acid polypeptide reads, in one-letter code: Golgi-associated RAB2 interactor protein 2 (422 aa).

The interval 353 to 404 is disordered; it reads PVESEANTSKEMKDKTSEEKMPDFQSTALKAEESRSLRTESNTSVLSPHIKS. Basic and acidic residues predominate over residues 360-374; the sequence is TSKEMKDKTSEEKMP.

It belongs to the GARIN family. As to quaternary structure, interacts with CALM1. Expressed in spermatozoa (at protein level).

It localises to the cell projection. The protein localises to the cilium. Its subcellular location is the flagellum. In terms of biological role, seems to play a role in sperm motility. The chain is Golgi-associated RAB2 interactor protein 2 from Homo sapiens (Human).